A 256-amino-acid chain; its full sequence is Type III pantothenate kinase (256 aa).

6-13 (DAGNSRIK) provides a ligand contact to ATP. Residues Tyr-90 and 97 to 100 (GSDR) contribute to the substrate site. The active-site Proton acceptor is the Asp-99. Residue Thr-123 participates in ATP binding. Residue Thr-187 coordinates substrate.

It belongs to the type III pantothenate kinase family. Homodimer. NH4(+) serves as cofactor. The cofactor is K(+).

It is found in the cytoplasm. The catalysed reaction is (R)-pantothenate + ATP = (R)-4'-phosphopantothenate + ADP + H(+). Its pathway is cofactor biosynthesis; coenzyme A biosynthesis; CoA from (R)-pantothenate: step 1/5. In terms of biological role, catalyzes the phosphorylation of pantothenate (Pan), the first step in CoA biosynthesis. This Burkholderia mallei (strain NCTC 10247) protein is Type III pantothenate kinase.